The chain runs to 398 residues: ATP-dependent RNA helicase eIF4A (398 aa).

Residues 25 to 53 (DSFDSMDLKPELLRGIYAYGFERPSAIQQ) carry the Q motif motif. The 171-residue stretch at 56 to 226 (IMPIIKGSDV…TKFMRDPVRI (171 aa)) folds into the Helicase ATP-binding domain. 69–76 (AQSGTGKT) provides a ligand contact to ATP. A DEAD box motif is present at residues 174 to 177 (DEAD). Residues 237–398 (GIKQFYIAVE…EMPMNVADLI (162 aa)) form the Helicase C-terminal domain.

It belongs to the DEAD box helicase family. eIF4A subfamily. As to quaternary structure, component of the eIF4F complex, which composition varies with external and internal environmental conditions. It is composed of at least eIF4A, eIF4E and eIF4G.

It is found in the cytoplasm. It carries out the reaction ATP + H2O = ADP + phosphate + H(+). Its function is as follows. ATP-dependent RNA helicase which is a subunit of the eIF4F complex involved in cap recognition and is required for mRNA binding to ribosome. In the current model of translation initiation, eIF4A unwinds RNA secondary structures in the 5'-UTR of mRNAs which is necessary to allow efficient binding of the small ribosomal subunit, and subsequent scanning for the initiator codon. This Aspergillus clavatus (strain ATCC 1007 / CBS 513.65 / DSM 816 / NCTC 3887 / NRRL 1 / QM 1276 / 107) protein is ATP-dependent RNA helicase eIF4A (tif1).